A 317-amino-acid polypeptide reads, in one-letter code: 3'-5' exoribonuclease YhaM (317 aa).

The OB DNA-binding region spans phenylalanine 17–serine 90. Residues histidine 163–lysine 279 form the HD domain.

It belongs to the YhaM family.

Its function is as follows. Shows a 3'-5' exoribonuclease activity. In Oceanobacillus iheyensis (strain DSM 14371 / CIP 107618 / JCM 11309 / KCTC 3954 / HTE831), this protein is 3'-5' exoribonuclease YhaM.